A 226-amino-acid polypeptide reads, in one-letter code: MARLLQASCLLSLLLAGFLPQSRGQDKSKMDCHGGVSGTIYEYGALTIDGEEYTPFKQYIGKYVLFVNVASYUGLTGQYIELNALQEELAPFGLDLLGFPCNQFGKQEPGENSEILPSLKYVRPGGGFVPNFQLFEKGDVNGEKEQKFYTFLKNSCPPTSELLGTSDRLFWEPMKVHDIRWNFEKFLVGPDGIPVMRWHHRTTISNVKMDILSYMRRQAALGVKRK.

Residues 1-24 form the signal peptide; sequence MARLLQASCLLSLLLAGFLPQSRG. Sec-73 is an active-site residue. A non-standard amino acid (selenocysteine) is located at residue Sec-73.

It belongs to the glutathione peroxidase family. In terms of assembly, homotetramer. As to expression, secreted in plasma.

It localises to the secreted. It carries out the reaction 2 glutathione + H2O2 = glutathione disulfide + 2 H2O. The enzyme catalyses tert-butyl hydroperoxide + 2 glutathione = tert-butanol + glutathione disulfide + H2O. Functionally, protects cells and enzymes from oxidative damage, by catalyzing the reduction of hydrogen peroxide, lipid peroxides and organic hydroperoxide, by glutathione. This is Glutathione peroxidase 3 from Sapajus apella (Brown-capped capuchin).